Consider the following 509-residue polypeptide: Photosystem II CP47 reaction center protein (509 aa).

6 helical membrane-spanning segments follow: residues 21 to 36 (SVHL…WAGS), 101 to 115 (IVLS…VWHW), 140 to 156 (GIHL…FGAF), 203 to 218 (IAAG…FHLT), 237 to 252 (VLSS…AFVV), and 457 to 472 (VFAL…HGAR).

The protein belongs to the PsbB/PsbC family. PsbB subfamily. As to quaternary structure, PSII is composed of 1 copy each of membrane proteins PsbA, PsbB, PsbC, PsbD, PsbE, PsbF, PsbH, PsbI, PsbJ, PsbK, PsbL, PsbM, PsbT, PsbX, PsbY, PsbZ, Psb30/Ycf12, peripheral proteins PsbO, CyanoQ (PsbQ), PsbU, PsbV and a large number of cofactors. It forms dimeric complexes. Requires Binds multiple chlorophylls. PSII binds additional chlorophylls, carotenoids and specific lipids. as cofactor.

Its subcellular location is the cellular thylakoid membrane. One of the components of the core complex of photosystem II (PSII). It binds chlorophyll and helps catalyze the primary light-induced photochemical processes of PSII. PSII is a light-driven water:plastoquinone oxidoreductase, using light energy to abstract electrons from H(2)O, generating O(2) and a proton gradient subsequently used for ATP formation. The chain is Photosystem II CP47 reaction center protein from Nostoc sp. (strain PCC 7120 / SAG 25.82 / UTEX 2576).